The following is a 156-amino-acid chain: Ribonuclease ageritin (156 aa).

Residues 1-21 (MSESSTFTTAVVPEGEGVAPM) form the signal peptide. The active site involves His-98. N-linked (GlcNAc...) asparagine glycosylation is found at Asn-100 and Asn-139.

Belongs to the ribotoxin-like family. Monomer. The cofactor is Mg(2+).

It is found in the vacuole lumen. It catalyses the reaction a 28S rRNA containing guanosine-adenosine pair + H2O = an [RNA fragment]-3'-adenosine-3'-phosphate + a 5'-a hydroxy-guanosine-3'-[RNA fragment].. Its activity is regulated as follows. In contrast to most ribotoxins, activity is completely inhibited by EDTA. In terms of biological role, fungal ribonuclease involved in fungal defense. Highly specific and highly toxic fungal endonuclease that cleaves a single phosphodiester bond in the 28S RNA of eukaryotic ribosomes at a universally conserved GAGA tetraloop of the sarcin-ricin loop (SRL). The damage of the SRL inhibits the binding of translation elongation factors and halts protein biosynthesis, ultimately resulting in the death of the target cells. Shows antitumor activity. Exerts cytotoxicity and induces apoptosis towards rat glial cells and human glioma cells, and also displays some activity towards human neurolastoma cell lines. Shows a strong entomotoxicity against Aedes aegypti larvae, yet no nematotoxicity against nematodes. The sequence is that of Ribonuclease ageritin from Cyclocybe aegerita (Black poplar mushroom).